We begin with the raw amino-acid sequence, 327 residues long: Zinc finger protein 444 (327 aa).

N-acetylmethionine is present on Met1. A Glycyl lysine isopeptide (Lys-Gly) (interchain with G-Cter in SUMO2) cross-link involves residue Lys8. 2 positions are modified to phosphoserine: Ser18 and Ser104. The SCAN box domain occupies 20–104 (WHRFRRFHLG…LEELWGPAAS (85 aa)). The disordered stretch occupies residues 101–171 (PAASPDGSSA…SPPLAPGLPA (71 aa)). Over residues 106–118 (DGSSATRVPQDVT) the composition is skewed to polar residues. The span at 134–148 (PLAGTAPGAEGPAPG) shows a compositional bias: low complexity. C2H2-type zinc fingers lie at residues 179-201 (TSCP…RQSH) and 207-229 (HACP…RDTH). Lys190 participates in a covalent cross-link: Glycyl lysine isopeptide (Lys-Gly) (interchain with G-Cter in SUMO2). Residues 220-243 (EHLRRHRDTHPGSPGSPGPALRPL) form a disordered region. Ser235 carries the phosphoserine modification. 2 C2H2-type zinc fingers span residues 250 to 272 (HACC…RKTH) and 278 to 300 (FACW…QRIH). Low complexity predominate over residues 305–314 (ASAQGAVAPG). Residues 305–327 (ASAQGAVAPGPDGGGPFPPWPLG) form a disordered region.

The protein belongs to the krueppel C2H2-type zinc-finger protein family.

The protein resides in the nucleus. Its function is as follows. Transcriptional regulator. Binds to the 5'-flanking critical region of the SCARF1 promoter. In Homo sapiens (Human), this protein is Zinc finger protein 444 (ZNF444).